A 96-amino-acid polypeptide reads, in one-letter code: uncharacterized protein (96 aa).

Cys-10, Cys-16, and Cys-55 together coordinate [3Fe-4S] cluster. The interval 67–96 (AGDGERASADPAPSPAEAERHAAKDQHNLG) is disordered. The span at 83–96 (EAERHAAKDQHNLG) shows a compositional bias: basic and acidic residues.

[3Fe-4S] cluster serves as cofactor.

Its function is as follows. Electron transport protein for the cytochrome systems. This is an uncharacterized protein from Bradyrhizobium diazoefficiens (strain JCM 10833 / BCRC 13528 / IAM 13628 / NBRC 14792 / USDA 110).